The primary structure comprises 293 residues: Formamidopyrimidine-DNA glycosylase (293 aa).

Pro-2 acts as the Schiff-base intermediate with DNA in catalysis. Glu-3 (proton donor) is an active-site residue. Lys-58 (proton donor; for beta-elimination activity) is an active-site residue. 3 residues coordinate DNA: His-104, Arg-123, and Lys-166. The FPG-type zinc-finger motif lies at 257-293 (QVYDREGEPCRTDGCEGVVKRFVQNGRSTFWCPKCQR). The Proton donor; for delta-elimination activity role is filled by Arg-283.

This sequence belongs to the FPG family. As to quaternary structure, monomer. It depends on Zn(2+) as a cofactor.

It carries out the reaction Hydrolysis of DNA containing ring-opened 7-methylguanine residues, releasing 2,6-diamino-4-hydroxy-5-(N-methyl)formamidopyrimidine.. The enzyme catalyses 2'-deoxyribonucleotide-(2'-deoxyribose 5'-phosphate)-2'-deoxyribonucleotide-DNA = a 3'-end 2'-deoxyribonucleotide-(2,3-dehydro-2,3-deoxyribose 5'-phosphate)-DNA + a 5'-end 5'-phospho-2'-deoxyribonucleoside-DNA + H(+). Involved in base excision repair of DNA damaged by oxidation or by mutagenic agents. Acts as a DNA glycosylase that recognizes and removes damaged bases. Has a preference for oxidized purines, such as 7,8-dihydro-8-oxoguanine (8-oxoG). Has AP (apurinic/apyrimidinic) lyase activity and introduces nicks in the DNA strand. Cleaves the DNA backbone by beta-delta elimination to generate a single-strand break at the site of the removed base with both 3'- and 5'-phosphates. This is Formamidopyrimidine-DNA glycosylase from Bradyrhizobium sp. (strain ORS 278).